A 561-amino-acid chain; its full sequence is Putative cysteine ligase BshC (561 aa).

A coiled-coil region spans residues 472–517 (LAQSVEKVMQSTLNQVENLKSKTIKAEKQRHNDLIAQIEKSRDNLL).

The protein belongs to the BshC family.

The protein is Putative cysteine ligase BshC of Chloroherpeton thalassium (strain ATCC 35110 / GB-78).